Reading from the N-terminus, the 383-residue chain is Galactokinase (383 aa).

Residue 34-37 (EHTD) coordinates substrate. Residue 124-130 (GAGLSSS) coordinates ATP. Mg(2+) contacts are provided by serine 130 and glutamate 162. Residue aspartate 174 is the Proton acceptor of the active site. Residue tyrosine 223 coordinates substrate.

Belongs to the GHMP kinase family. GalK subfamily.

The protein localises to the cytoplasm. It catalyses the reaction alpha-D-galactose + ATP = alpha-D-galactose 1-phosphate + ADP + H(+). Its pathway is carbohydrate metabolism; galactose metabolism. Its function is as follows. Catalyzes the transfer of the gamma-phosphate of ATP to D-galactose to form alpha-D-galactose-1-phosphate (Gal-1-P). The protein is Galactokinase of Yersinia enterocolitica serotype O:8 / biotype 1B (strain NCTC 13174 / 8081).